Reading from the N-terminus, the 259-residue chain is tRNA pseudouridine synthase A (259 aa).

Asp52 acts as the Nucleophile in catalysis. Position 113 (Tyr113) interacts with substrate.

The protein belongs to the tRNA pseudouridine synthase TruA family. As to quaternary structure, homodimer.

It carries out the reaction uridine(38/39/40) in tRNA = pseudouridine(38/39/40) in tRNA. Formation of pseudouridine at positions 38, 39 and 40 in the anticodon stem and loop of transfer RNAs. This is tRNA pseudouridine synthase A from Allorhizobium ampelinum (strain ATCC BAA-846 / DSM 112012 / S4) (Agrobacterium vitis (strain S4)).